The sequence spans 322 residues: Fructose-1,6-bisphosphatase class 1 3 (322 aa).

Mg(2+)-binding residues include glutamate 84, aspartate 103, leucine 105, and aspartate 106. Residues 106-109, asparagine 198, and lysine 262 contribute to the substrate site; that span reads DGSS. Glutamate 268 is a Mg(2+) binding site.

It belongs to the FBPase class 1 family. As to quaternary structure, homotetramer. The cofactor is Mg(2+).

The protein resides in the cytoplasm. The catalysed reaction is beta-D-fructose 1,6-bisphosphate + H2O = beta-D-fructose 6-phosphate + phosphate. It participates in carbohydrate biosynthesis; gluconeogenesis. This chain is Fructose-1,6-bisphosphatase class 1 3, found in Pseudoalteromonas translucida (strain TAC 125).